The chain runs to 209 residues: UPF0319 protein VFMJ11_1730 (209 aa).

An N-terminal signal peptide occupies residues M1–A21.

This sequence belongs to the UPF0319 family.

The polypeptide is UPF0319 protein VFMJ11_1730 (Aliivibrio fischeri (strain MJ11) (Vibrio fischeri)).